The primary structure comprises 246 residues: Probable transcriptional regulatory protein Dshi_2762 (246 aa).

The protein belongs to the TACO1 family.

Its subcellular location is the cytoplasm. This chain is Probable transcriptional regulatory protein Dshi_2762, found in Dinoroseobacter shibae (strain DSM 16493 / NCIMB 14021 / DFL 12).